Here is a 277-residue protein sequence, read N- to C-terminus: Bifunctional protein FolD (277 aa).

Residues 164–166 (GRS), Ser189, and Thr230 contribute to the NADP(+) site.

Belongs to the tetrahydrofolate dehydrogenase/cyclohydrolase family. Homodimer.

The catalysed reaction is (6R)-5,10-methylene-5,6,7,8-tetrahydrofolate + NADP(+) = (6R)-5,10-methenyltetrahydrofolate + NADPH. It catalyses the reaction (6R)-5,10-methenyltetrahydrofolate + H2O = (6R)-10-formyltetrahydrofolate + H(+). It functions in the pathway one-carbon metabolism; tetrahydrofolate interconversion. Catalyzes the oxidation of 5,10-methylenetetrahydrofolate to 5,10-methenyltetrahydrofolate and then the hydrolysis of 5,10-methenyltetrahydrofolate to 10-formyltetrahydrofolate. The chain is Bifunctional protein FolD from Clostridium perfringens (strain ATCC 13124 / DSM 756 / JCM 1290 / NCIMB 6125 / NCTC 8237 / Type A).